The following is a 468-amino-acid chain: Tyrosine-protein phosphatase YopH (468 aa).

The tract at residues 127–194 (ARGHVSSHSH…TVSPYGPEAR (68 aa)) is disordered. A compositionally biased stretch (low complexity) spans 130-140 (HVSSHSHSVLH). The 310-residue stretch at 152 to 461 (SHLDPRTPPL…DVLIKLAEGQ (310 aa)) folds into the Tyrosine-protein phosphatase domain. Cys-403 (phosphocysteine intermediate) is an active-site residue.

It belongs to the protein-tyrosine phosphatase family. Non-receptor class subfamily. Monomer.

It localises to the secreted. The catalysed reaction is O-phospho-L-tyrosyl-[protein] + H2O = L-tyrosyl-[protein] + phosphate. In terms of biological role, essential virulence determinant. This protein is a protein tyrosine phosphatase. The essential function of YopH in Yersinia pathogenesis is host-protein dephosphorylation. It contributes to the ability of the bacteria to resist phagocytosis by peritoneal macrophages. This Yersinia enterocolitica protein is Tyrosine-protein phosphatase YopH (yopH).